Here is a 256-residue protein sequence, read N- to C-terminus: L-erythrulose-1-phosphate isomerase (256 aa).

The Electrophile role is filled by His-96. Glu-169 acts as the Proton acceptor in catalysis. 2 residues coordinate substrate: Gly-175 and Ser-212.

It belongs to the triosephosphate isomerase family. As to quaternary structure, homodimer.

It is found in the cytoplasm. The catalysed reaction is L-erythrulose 1-phosphate = D-erythrulose 4-phosphate. It participates in carbohydrate metabolism; erythritol degradation. Functionally, catalyzes the isomerization of D-erythrulose-4P to L-erythrulose-1P. In Brucella melitensis biotype 1 (strain ATCC 23456 / CCUG 17765 / NCTC 10094 / 16M), this protein is L-erythrulose-1-phosphate isomerase.